The chain runs to 265 residues: 3'(2'),5'-bisphosphate nucleotidase CysQ (265 aa).

Residues Glu80, Asp99, Leu101, Asp102, and Asp222 each coordinate Mg(2+). Substrate is bound at residue Glu80. Residues 101 to 104 (LDGT) and Asp222 each bind substrate.

It belongs to the inositol monophosphatase superfamily. CysQ family. The cofactor is Mg(2+).

It localises to the cell inner membrane. The enzyme catalyses adenosine 3',5'-bisphosphate + H2O = AMP + phosphate. In terms of biological role, converts adenosine-3',5'-bisphosphate (PAP) to AMP. In Buchnera aphidicola subsp. Acyrthosiphon pisum (strain APS) (Acyrthosiphon pisum symbiotic bacterium), this protein is 3'(2'),5'-bisphosphate nucleotidase CysQ.